Here is a 160-residue protein sequence, read N- to C-terminus: MAGFMKNAMSYLGMSDVAEGEDDFEDDVDTGETSFDSDHSVTPMPSSSASASTPSAPREQSNPFQGGRVSRITTIHPKTYDDAQMVGRAIRDGIPVVLNLTGVAEAVAYRIVDFSAGVVFGVRGSIERVTPRVFLLSPAQVNIKVEEPEDKGPAHDLFAD.

Acidic residues predominate over residues 18-30; it reads AEGEDDFEDDVDT. A disordered region spans residues 18 to 72; the sequence is AEGEDDFEDDVDTGETSFDSDHSVTPMPSSSASASTPSAPREQSNPFQGGRVSRI. A compositionally biased stretch (low complexity) spans 45-57; that stretch reads PSSSASASTPSAP.

The protein belongs to the SepF family. In terms of assembly, homodimer. Interacts with FtsZ.

The protein resides in the cytoplasm. Functionally, cell division protein that is part of the divisome complex and is recruited early to the Z-ring. Probably stimulates Z-ring formation, perhaps through the cross-linking of FtsZ protofilaments. Its function overlaps with FtsA. The polypeptide is Cell division protein SepF (Bifidobacterium adolescentis (strain ATCC 15703 / DSM 20083 / NCTC 11814 / E194a)).